Here is a 251-residue protein sequence, read N- to C-terminus: DNA repair protein RecO (251 aa).

Belongs to the RecO family.

In terms of biological role, involved in DNA repair and RecF pathway recombination. The polypeptide is DNA repair protein RecO (Staphylococcus saprophyticus subsp. saprophyticus (strain ATCC 15305 / DSM 20229 / NCIMB 8711 / NCTC 7292 / S-41)).